A 228-amino-acid polypeptide reads, in one-letter code: MPQLILIRHGQSQWNLENRFTGWWDVDVTEKGAAEAWAAGELMKAKGVAPDTCFTSVQTRAIKTLNLALEAMGRLWLPVTKDWRLNERHYGGLTGLDKAETAAKHGDEQVRIWRRSFDIPPPPLEAGSQWDLSADPRYAGIAIPSTESLKDTIARVLPYYEAAIAPQLAAGRTVLISAHGNSLRALVKHLSGISDADITGLEIPTGQPIVYEINDDLSARERYYLSER.

Substrate contacts are provided by residues 8 to 15 (RHGQSQWN), 21 to 22 (TG), Arg-60, 87 to 90 (ERHY), Lys-98, 114 to 115 (RR), and 180 to 181 (GN). His-9 functions as the Tele-phosphohistidine intermediate in the catalytic mechanism. Glu-87 functions as the Proton donor/acceptor in the catalytic mechanism.

Belongs to the phosphoglycerate mutase family. BPG-dependent PGAM subfamily. Homodimer.

The enzyme catalyses (2R)-2-phosphoglycerate = (2R)-3-phosphoglycerate. It functions in the pathway carbohydrate degradation; glycolysis; pyruvate from D-glyceraldehyde 3-phosphate: step 3/5. Its function is as follows. Catalyzes the interconversion of 2-phosphoglycerate and 3-phosphoglycerate. In Sphingopyxis alaskensis (strain DSM 13593 / LMG 18877 / RB2256) (Sphingomonas alaskensis), this protein is 2,3-bisphosphoglycerate-dependent phosphoglycerate mutase.